The following is a 144-amino-acid chain: Large ribosomal subunit protein uL15 (144 aa).

The disordered stretch occupies residues 1–49 (MRLNTLSPAAGSKSAPKRVGRGIGSGLGKTAGRGHKGQKSRSGGGVRVG). Residues 21–31 (RGIGSGLGKTA) show a composition bias toward gly residues.

This sequence belongs to the universal ribosomal protein uL15 family. Part of the 50S ribosomal subunit.

In terms of biological role, binds to the 23S rRNA. The protein is Large ribosomal subunit protein uL15 of Shewanella denitrificans (strain OS217 / ATCC BAA-1090 / DSM 15013).